The primary structure comprises 82 residues: Envelope small membrane protein (82 aa).

Topologically, residues 1-16 (MLPFVHEQIGTIIVNF) are virion surface. The helical transmembrane segment at 17-37 (FILTVVCAITLLVCLAVLTAI) threads the bilayer. The Intravirion segment spans residues 38–78 (RLCVQCASGVNTLLFVPAFYIYNTGRNAYFKFQENRPPFPP).

The protein belongs to the betacoronaviruses E protein family. As to quaternary structure, homopentamer. Interacts with membrane protein M in the budding compartment of the host cell, which is located between endoplasmic reticulum and the Golgi complex. Interacts with Nucleoprotein.

The protein localises to the host Golgi apparatus membrane. In terms of biological role, plays a central role in virus morphogenesis and assembly. Acts as a viroporin and self-assembles in host membranes forming pentameric protein-lipid pores that allow ion transport. Also plays a role in the induction of apoptosis. The protein is Envelope small membrane protein of Tylonycteris pachypus (Lesser bamboo bat).